The sequence spans 23 residues: Potassium channel toxin kappa-KTx 2.3 (23 aa).

2 disulfide bridges follow: C4-C22 and C8-C18.

This sequence belongs to the short scorpion toxin superfamily. Potassium channel inhibitor kappa-KTx family. Kappa-KTx 2 subfamily. As to expression, expressed by the venom gland.

It localises to the secreted. Functionally, decreases the amplitude of the potassium current of the rat channels Kv1.1/KCNA1 by 33% and Kv1.2/KCNA2 by 8% as well as human Kv1.3/KCNA3 by 70%. In Opisthacanthus madagascariensis (Scorpion), this protein is Potassium channel toxin kappa-KTx 2.3.